A 193-amino-acid chain; its full sequence is dCTP deaminase (193 aa).

Residues 110 to 115 (RSSLAR), Asp-128, 136 to 138 (VLE), Tyr-171, Lys-178, and Gln-182 contribute to the dCTP site. Glu-138 (proton donor/acceptor) is an active-site residue. Positions 171–193 (YNKRKNAKYKDQQDAVASRISQD) are disordered.

This sequence belongs to the dCTP deaminase family. In terms of assembly, homotrimer.

The enzyme catalyses dCTP + H2O + H(+) = dUTP + NH4(+). It participates in pyrimidine metabolism; dUMP biosynthesis; dUMP from dCTP (dUTP route): step 1/2. Catalyzes the deamination of dCTP to dUTP. This chain is dCTP deaminase, found in Shewanella oneidensis (strain ATCC 700550 / JCM 31522 / CIP 106686 / LMG 19005 / NCIMB 14063 / MR-1).